The following is a 436-amino-acid chain: F-box/LRR-repeat protein 20 (436 aa).

Positions 22–68 (AVINKKLPKELLLRIFSFLDVVTLCRCAQVSRAWNVLALDGSNWQRI) constitute an F-box domain. LRR repeat units lie at residues 74 to 100 (QRDI…SLRG), 101 to 126 (CLGV…NLNG), 127 to 152 (CTKT…DLAS), 153 to 178 (CTSI…NISW), 179 to 204 (CDQV…FLKG), 205 to 230 (CTQL…NLQT), 231 to 256 (CLQI…CASG), 257 to 282 (CSNI…EVAR), 283 to 308 (CSQL…DLEE), 309 to 334 (CVQI…SLSH), 335 to 363 (CELI…ELDN), 364 to 388 (CPLI…ELYD), and 389 to 414 (CQQI…AYFA). Residue T417 is modified to Phosphothreonine. S421 is subject to Phosphoserine.

In terms of assembly, interacts with SKP1 and CUL1.

It is found in the cytoplasm. Its function is as follows. Substrate-recognition component of the SCF (SKP1-CUL1-F-box protein)-type E3 ubiquitin ligase complex. Role in neural transmission. The sequence is that of F-box/LRR-repeat protein 20 (FBXL20) from Bos taurus (Bovine).